We begin with the raw amino-acid sequence, 378 residues long: tRNA-specific 2-thiouridylase MnmA (378 aa).

ATP contacts are provided by residues 6–13 (AMSGGVDS) and Leu-32. The active-site Nucleophile is Cys-101. A disulfide bridge links Cys-101 with Cys-199. Gly-125 is a binding site for ATP. Positions 148-150 (KDQ) are interaction with tRNA. The active-site Cysteine persulfide intermediate is the Cys-199.

The protein belongs to the MnmA/TRMU family.

Its subcellular location is the cytoplasm. The catalysed reaction is S-sulfanyl-L-cysteinyl-[protein] + uridine(34) in tRNA + AH2 + ATP = 2-thiouridine(34) in tRNA + L-cysteinyl-[protein] + A + AMP + diphosphate + H(+). In terms of biological role, catalyzes the 2-thiolation of uridine at the wobble position (U34) of tRNA, leading to the formation of s(2)U34. This is tRNA-specific 2-thiouridylase MnmA from Micrococcus luteus (strain ATCC 4698 / DSM 20030 / JCM 1464 / CCM 169 / CCUG 5858 / IAM 1056 / NBRC 3333 / NCIMB 9278 / NCTC 2665 / VKM Ac-2230) (Micrococcus lysodeikticus).